The following is a 464-amino-acid chain: Argininosuccinate lyase (464 aa).

Belongs to the lyase 1 family. Argininosuccinate lyase subfamily.

Its subcellular location is the cytoplasm. It catalyses the reaction 2-(N(omega)-L-arginino)succinate = fumarate + L-arginine. Its pathway is amino-acid biosynthesis; L-arginine biosynthesis; L-arginine from L-ornithine and carbamoyl phosphate: step 3/3. The chain is Argininosuccinate lyase from Desulfotalea psychrophila (strain LSv54 / DSM 12343).